Reading from the N-terminus, the 529-residue chain is Bifunctional purine biosynthesis protein PurH (529 aa).

Residues 1–148 (MQQPRPIRRA…KNHKDVAIVV (148 aa)) form the MGS-like domain.

This sequence belongs to the PurH family.

It carries out the reaction (6R)-10-formyltetrahydrofolate + 5-amino-1-(5-phospho-beta-D-ribosyl)imidazole-4-carboxamide = 5-formamido-1-(5-phospho-D-ribosyl)imidazole-4-carboxamide + (6S)-5,6,7,8-tetrahydrofolate. It catalyses the reaction IMP + H2O = 5-formamido-1-(5-phospho-D-ribosyl)imidazole-4-carboxamide. It functions in the pathway purine metabolism; IMP biosynthesis via de novo pathway; 5-formamido-1-(5-phospho-D-ribosyl)imidazole-4-carboxamide from 5-amino-1-(5-phospho-D-ribosyl)imidazole-4-carboxamide (10-formyl THF route): step 1/1. The protein operates within purine metabolism; IMP biosynthesis via de novo pathway; IMP from 5-formamido-1-(5-phospho-D-ribosyl)imidazole-4-carboxamide: step 1/1. In Serratia proteamaculans (strain 568), this protein is Bifunctional purine biosynthesis protein PurH.